A 312-amino-acid polypeptide reads, in one-letter code: Olfactory receptor-like protein COR5 (312 aa).

Residues 1-26 (MALGNCTTPTTFILSGLTDNPRLQMP) lie on the Extracellular side of the membrane. The N-linked (GlcNAc...) asparagine glycan is linked to Asn5. A helical membrane pass occupies residues 27–49 (LFMVFLAIYTITLLANLGLIALI). The Cytoplasmic segment spans residues 50–57 (SVDFHLQT). A helical membrane pass occupies residues 58-79 (PMYIFLQNLSFTDAAYSTVITP). Over 80-100 (KMLATFLEERRTISYVGCILQ) the chain is Extracellular. Residues Cys97 and Cys179 are joined by a disulfide bond. The helical transmembrane segment at 101 to 120 (YFSFVLLTSSECLLLAVMAY) threads the bilayer. Residues 121–139 (DRYVAICKPLLYPAIMTKA) are Cytoplasmic-facing. The chain crosses the membrane as a helical span at residues 140-164 (VCWRLVEGLYSLAFLNSLVHTSGLL). The Extracellular portion of the chain corresponds to 165 to 205 (KLSFCSSNVVNHFFCDNSPLFQISSSSTTLNELLVFIFGSW). A helical membrane pass occupies residues 206–226 (FAMSSIITTPISYVFIILTVV). The Cytoplasmic portion of the chain corresponds to 227–239 (RIRSKDGKYKAFS). Residues 240 to 260 (TCTSHLMAVSLFHGTVIFMYL) traverse the membrane as a helical segment. Over 261–271 (RPVKLFSLDTD) the chain is Extracellular. The helical transmembrane segment at 272-292 (KIASLFYTVVIPMLNPLIYSW) threads the bilayer. At 293–312 (RNKEVKDALRRVIATNVWIH) the chain is on the cytoplasmic side.

It belongs to the G-protein coupled receptor 1 family.

The protein resides in the cell membrane. Odorant receptor. This chain is Olfactory receptor-like protein COR5 (COR5), found in Gallus gallus (Chicken).